Here is a 493-residue protein sequence, read N- to C-terminus: Glutamyl-tRNA(Gln) amidotransferase subunit A (493 aa).

Active-site charge relay system residues include Lys78 and Ser158. Ser182 functions as the Acyl-ester intermediate in the catalytic mechanism.

The protein belongs to the amidase family. GatA subfamily. As to quaternary structure, heterotrimer of A, B and C subunits.

It carries out the reaction L-glutamyl-tRNA(Gln) + L-glutamine + ATP + H2O = L-glutaminyl-tRNA(Gln) + L-glutamate + ADP + phosphate + H(+). Allows the formation of correctly charged Gln-tRNA(Gln) through the transamidation of misacylated Glu-tRNA(Gln) in organisms which lack glutaminyl-tRNA synthetase. The reaction takes place in the presence of glutamine and ATP through an activated gamma-phospho-Glu-tRNA(Gln). This is Glutamyl-tRNA(Gln) amidotransferase subunit A from Methylorubrum populi (strain ATCC BAA-705 / NCIMB 13946 / BJ001) (Methylobacterium populi).